We begin with the raw amino-acid sequence, 310 residues long: Acetylglutamate kinase (310 aa).

Substrate contacts are provided by residues 76–77 (GG), R98, and N203.

Belongs to the acetylglutamate kinase family. ArgB subfamily.

It localises to the cytoplasm. The catalysed reaction is N-acetyl-L-glutamate + ATP = N-acetyl-L-glutamyl 5-phosphate + ADP. The protein operates within amino-acid biosynthesis; L-arginine biosynthesis; N(2)-acetyl-L-ornithine from L-glutamate: step 2/4. Functionally, catalyzes the ATP-dependent phosphorylation of N-acetyl-L-glutamate. This Cutibacterium acnes (strain DSM 16379 / KPA171202) (Propionibacterium acnes) protein is Acetylglutamate kinase.